Reading from the N-terminus, the 333-residue chain is MSEKHLTYADSGVDIKEEEKTVKTLIDKLSYVRKGIGAPLTGIGHYAGLLDFGEYALAMTTDGVGSKVLIANEMQRWNTVGIDCIAMNVNDLLAIGAEPVAFVDYLALEKHEEGFAEQIGEGLLKGAEISRMSIVGGETATLPDIIKGFDLAGTCLGYLKKEDIIEGGRVRVGDVIVGIPSTGVHSNGYTLVRKIIQESGYSYHDPCPYDSSKTIGDDLLEPTRIYIEVLDVLKACEVHGLAHITGSGLLKLRRVTKLGFDFYDPLEPQEIFKFLRKEGGVDDLEMYRTFNMGMGFLIILPEKDAEKAAEITGGKIVGKIVESGIRVKDLVIE.

The protein belongs to the AIR synthase family.

It localises to the cytoplasm. It catalyses the reaction 2-formamido-N(1)-(5-O-phospho-beta-D-ribosyl)acetamidine + ATP = 5-amino-1-(5-phospho-beta-D-ribosyl)imidazole + ADP + phosphate + H(+). Its pathway is purine metabolism; IMP biosynthesis via de novo pathway; 5-amino-1-(5-phospho-D-ribosyl)imidazole from N(2)-formyl-N(1)-(5-phospho-D-ribosyl)glycinamide: step 2/2. The protein is Phosphoribosylformylglycinamidine cyclo-ligase of Methanosarcina mazei (strain ATCC BAA-159 / DSM 3647 / Goe1 / Go1 / JCM 11833 / OCM 88) (Methanosarcina frisia).